Consider the following 571-residue polypeptide: UvrABC system protein C (571 aa).

Residues 15–93 (TSPGVYLWKD…VDRFNPEFNI (79 aa)) form the GIY-YIG domain. Residues 184–219 (NNYLNELTNKMHTAANNMQFELALFLRDGLTYLKKL) enclose the UVR domain.

This sequence belongs to the UvrC family. In terms of assembly, interacts with UvrB in an incision complex.

The protein localises to the cytoplasm. Functionally, the UvrABC repair system catalyzes the recognition and processing of DNA lesions. UvrC both incises the 5' and 3' sides of the lesion. The N-terminal half is responsible for the 3' incision and the C-terminal half is responsible for the 5' incision. In Mycoplasmopsis agalactiae (strain NCTC 10123 / CIP 59.7 / PG2) (Mycoplasma agalactiae), this protein is UvrABC system protein C.